Consider the following 506-residue polypeptide: Histidine ammonia-lyase (506 aa).

The 5-imidazolinone (Ala-Gly) cross-link spans 143–145 (ASG). Residue Ser-144 is modified to 2,3-didehydroalanine (Ser).

Belongs to the PAL/histidase family. Post-translationally, contains an active site 4-methylidene-imidazol-5-one (MIO), which is formed autocatalytically by cyclization and dehydration of residues Ala-Ser-Gly.

It localises to the cytoplasm. The catalysed reaction is L-histidine = trans-urocanate + NH4(+). The protein operates within amino-acid degradation; L-histidine degradation into L-glutamate; N-formimidoyl-L-glutamate from L-histidine: step 1/3. This Salmonella dublin (strain CT_02021853) protein is Histidine ammonia-lyase.